The sequence spans 212 residues: MAIGLIGRKVGMTRIFTEDGASIPVTVIEIAANRVAQVKTLETDGYRALQITTGTKKANRITKPEAGHFAKAGVEAGRGLWEMRLADGEGEGIEVGAELNVDIFADVAKVDVTGQSKGKGFQGGIKRWNFRTQDATHGNSLAHRANGSIGQNQTPGRVFKGKKMSGHMGAERVTTQNLDVVRVDAERNLLLVKGAVPGATNGDLIIKPAVKA.

Residue Gln153 is modified to N5-methylglutamine.

This sequence belongs to the universal ribosomal protein uL3 family. As to quaternary structure, part of the 50S ribosomal subunit. Forms a cluster with proteins L14 and L19. Post-translationally, methylated by PrmB.

Functionally, one of the primary rRNA binding proteins, it binds directly near the 3'-end of the 23S rRNA, where it nucleates assembly of the 50S subunit. This is Large ribosomal subunit protein uL3 from Shewanella loihica (strain ATCC BAA-1088 / PV-4).